Consider the following 572-residue polypeptide: Urease subunit alpha (572 aa).

The region spanning 134-572 is the Urease domain; it reads AGIDSHIHLI…AAMNQRYFFG (439 aa). Ni(2+) is bound by residues histidine 139, histidine 141, and lysine 222. Position 222 is an N6-carboxylysine (lysine 222). Histidine 224 contributes to the substrate binding site. Ni(2+) contacts are provided by histidine 251 and histidine 277. Histidine 325 (proton donor) is an active-site residue. A Ni(2+)-binding site is contributed by aspartate 365.

It belongs to the metallo-dependent hydrolases superfamily. Urease alpha subunit family. As to quaternary structure, heterotrimer of UreA (gamma), UreB (beta) and UreC (alpha) subunits. Three heterotrimers associate to form the active enzyme. It depends on Ni cation as a cofactor. Post-translationally, carboxylation allows a single lysine to coordinate two nickel ions.

Its subcellular location is the cytoplasm. The catalysed reaction is urea + 2 H2O + H(+) = hydrogencarbonate + 2 NH4(+). It participates in nitrogen metabolism; urea degradation; CO(2) and NH(3) from urea (urease route): step 1/1. This Yersinia enterocolitica serotype O:8 / biotype 1B (strain NCTC 13174 / 8081) protein is Urease subunit alpha.